A 625-amino-acid chain; its full sequence is Vacuolar-sorting receptor 2 (625 aa).

The first 19 residues, 1–19 (MRTTNVWLVVIVWVTVGWS), serve as a signal peptide directing secretion. Topologically, residues 20 to 567 (SCTGRFVVEK…INRDARGDFS (548 aa)) are lumenal. Positions 55 to 167 (QYGGSMSGAV…SLGSAIKTAI (113 aa)) constitute a PA domain. 3 N-linked (GlcNAc...) asparagine glycosylation sites follow: Asn147, Asn293, and Asn433. EGF-like domains lie at 415 to 465 (ETNE…THCE) and 468 to 515 (GALR…KECK). 7 cysteine pairs are disulfide-bonded: Cys419–Cys437, Cys426–Cys446, Cys448–Cys464, Cys472–Cys492, Cys479–Cys500, Cys502–Cys514, and Cys544–Cys557. Residues 516-558 (DVNECEEKTACQCRDCKCKNTWGSYECSCSGSLLYIREHDICI) enclose the EGF-like 3; calcium-binding domain. The helical transmembrane segment at 568-588 (WGVIWIIIMGLGAAALGAYTV) threads the bilayer. At 589 to 625 (YKYRIRTYMDSEIRAIMAQYMPLDNNPNTQLSSQLEL) the chain is on the cytoplasmic side. A Tyrosine-based internalization motif motif is present at residues 608–611 (YMPL).

The protein belongs to the VSR (BP-80) family. In terms of tissue distribution, expressed only in flowers.

It localises to the membrane. It is found in the golgi apparatus membrane. Its subcellular location is the cytoplasmic vesicle. The protein localises to the clathrin-coated vesicle membrane. The protein resides in the prevacuolar compartment membrane. Its function is as follows. Vacuolar-sorting receptor (VSR) involved in clathrin-coated vesicles sorting from Golgi apparatus to vacuoles. This is Vacuolar-sorting receptor 2 from Arabidopsis thaliana (Mouse-ear cress).